The sequence spans 238 residues: Ubiquitin-conjugating enzyme E2 R2 (238 aa).

Residues 8-174 enclose the UBC core domain; it reads SSQKALMLEL…IRKQVSATKA (167 aa). Cys-93 functions as the Glycyl thioester intermediate in the catalytic mechanism. The important for ubiquitin transfer stretch occupies residues 98-113; sequence HPPVDDPQSGELPSER. Positions 194–238 are disordered; the sequence is TKVPSNDNSSDLLYDDLYDDDIDDEDEEEEDADCYDDDDSGNEES. Residues 206–238 show a composition bias toward acidic residues; that stretch reads LYDDLYDDDIDDEDEEEEDADCYDDDDSGNEES. Ser-233 carries the post-translational modification Phosphoserine; by CK2.

This sequence belongs to the ubiquitin-conjugating enzyme family. As to quaternary structure, interacts with multiple Cul1-RING E3 ubiquitin-protein ligase complexes, also known as SCF (SKP1-CUL1-F-box protein) complexes, including SCF(FBXW7) and SCF(BTRC). Interacts with multiple Cul2-RING (CRL2) E3 ubiquitin-protein ligase complexes, also known as ECS (Elongin BC-CUL2/5-SOCS-box protein) complexes, including CRL2(FEM1C) and ECS(VHL). When phosphorylated, interacts with beta-TrCP (BTRC).

It catalyses the reaction S-ubiquitinyl-[E1 ubiquitin-activating enzyme]-L-cysteine + [E2 ubiquitin-conjugating enzyme]-L-cysteine = [E1 ubiquitin-activating enzyme]-L-cysteine + S-ubiquitinyl-[E2 ubiquitin-conjugating enzyme]-L-cysteine.. It participates in protein modification; protein ubiquitination. Neddylation of CUL2 in the CRL2(FEM1C) E3 ligase complex increases substrate affinity of UBE2R2 and the ubiquitin-transfer rate in the E2-E3 complex. E2 ubiquitin-conjugating enzyme that accepts ubiquitin from an E1 ubiquitin-activating protein, and catalyzes its covalent attachment to other proteins by an E3 ubiquitin-protein ligase complex. In vitro catalyzes monoubiquitination and 'Lys-48'-linked polyubiquitination. Works in collaboration with various Cul1-RING and Cul2-RING E3 ligase complexes. May be involved in degradation of katenin. The sequence is that of Ubiquitin-conjugating enzyme E2 R2 (UBE2R2) from Homo sapiens (Human).